Reading from the N-terminus, the 281-residue chain is 3-hydroxybutyryl-CoA dehydrogenase (281 aa).

It belongs to the 3-hydroxyacyl-CoA dehydrogenase family.

The catalysed reaction is (3S)-3-hydroxybutanoyl-CoA + NADP(+) = acetoacetyl-CoA + NADPH + H(+). It participates in lipid metabolism; butanoate metabolism. This Clostridioides difficile (Peptoclostridium difficile) protein is 3-hydroxybutyryl-CoA dehydrogenase (hbd).